The sequence spans 275 residues: N-acetyltransferase YodP (275 aa).

The 147-residue stretch at 125–271 folds into the N-acetyltransferase domain; the sequence is FTMRKAETND…AEGLENMNIW (147 aa).

Belongs to the acetyltransferase family.

It catalyses the reaction (3S)-3,6-diaminohexanoate + acetyl-CoA = (3S)-6-acetamido-3-aminohexanoate + CoA + H(+). In terms of biological role, in vitro, is able to catalyze the acetylation of beta-lysine to N6-acetyl-beta-lysine, an archaeal osmolyte produced by methanogenic archaea. Its physiological function has not yet been elucidated. This Bacillus subtilis (strain 168) protein is N-acetyltransferase YodP (yodP).